The primary structure comprises 132 residues: MDVNVSYKDTYSVITYQVWEPIDGGKNITLIIEYDADIVDNGILFKTVSIPIGGDLNIKNFHINFVSPYYLTYQEPDGNNFQIPKKTLLIINAEFSILPLPKLPVHGYVVFWLSILCILIIIFVYTELRRKK.

Residues 105–125 (VHGYVVFWLSILCILIIIFVY) form a helical membrane-spanning segment.

The protein resides in the membrane. This is an uncharacterized protein from Methanocaldococcus jannaschii (strain ATCC 43067 / DSM 2661 / JAL-1 / JCM 10045 / NBRC 100440) (Methanococcus jannaschii).